A 200-amino-acid chain; its full sequence is LIM domain-containing protein WLIM2a (200 aa).

LIM zinc-binding domains are found at residues 8-68 and 107-167; these read QKCR…LFKE and DKCA…LFKE.

Interacts with F-actin. As to expression, expressed in roots, leaves, stems, flowers and siliques. Barely detected in pollen.

It is found in the cytoplasm. It localises to the cytoskeleton. Functionally, binds to actin filaments and promotes cross-linking into thick bundles. Has an actin-stabilizing activity. The actin regulatory activities are not regulated by pH and [Ca(2+)]. The protein is LIM domain-containing protein WLIM2a of Arabidopsis thaliana (Mouse-ear cress).